The following is a 26-amino-acid chain: Mucus envelope protein (26 aa).

Glycosylated. Produced by the opercular gland in the gill cavity and secreted as part of the mucus cocoon.

It is found in the secreted. In terms of biological role, exhibits antibacterial activity. May play a role in protection against parasite settlement. This chain is Mucus envelope protein, found in Scarus vetula (Queen parrotfish).